The chain runs to 302 residues: Spheroidin-like protein (302 aa).

An N-terminal signal peptide occupies residues 1–19; the sequence is MIALLIALFAAIHAPAVRS. N-linked (GlcNAc...) asparagine; by host glycans are attached at residues asparagine 193 and asparagine 293.

Homodimer; disulfide-linked.

It is found in the host membrane. Its function is as follows. Component of the virus occlusion bodies, which are large proteinaceous structures (polyhedra), that protect the virus from the outside environment for extended periods until they are ingested by insect larvae. The chain is Spheroidin-like protein (SLP) from Autographa californica nuclear polyhedrosis virus (AcMNPV).